The following is a 133-amino-acid chain: Probable nuclear transport factor 2 (133 aa).

The NTF2 domain occupies 10 to 128 (VAKAFIQHYY…YFIGNEIFRL (119 aa)).

Its subcellular location is the cytoplasm. Its function is as follows. Facilitates protein transport into the nucleus. Could be part of a multicomponent system of cytosolic factors that assemble at the pore complex during nuclear import. The sequence is that of Probable nuclear transport factor 2 (ran-4) from Caenorhabditis elegans.